A 291-amino-acid chain; its full sequence is 4-diphosphocytidyl-2-C-methyl-D-erythritol kinase (291 aa).

Lys19 is an active-site residue. 102-112 (PMGGGIGGGSS) is an ATP binding site. Residue Asp144 is part of the active site.

Belongs to the GHMP kinase family. IspE subfamily.

It catalyses the reaction 4-CDP-2-C-methyl-D-erythritol + ATP = 4-CDP-2-C-methyl-D-erythritol 2-phosphate + ADP + H(+). It functions in the pathway isoprenoid biosynthesis; isopentenyl diphosphate biosynthesis via DXP pathway; isopentenyl diphosphate from 1-deoxy-D-xylulose 5-phosphate: step 3/6. Functionally, catalyzes the phosphorylation of the position 2 hydroxy group of 4-diphosphocytidyl-2C-methyl-D-erythritol. This Ectopseudomonas mendocina (strain ymp) (Pseudomonas mendocina) protein is 4-diphosphocytidyl-2-C-methyl-D-erythritol kinase.